Reading from the N-terminus, the 342-residue chain is Ribosomal RNA small subunit methyltransferase C (342 aa).

It belongs to the methyltransferase superfamily. RsmC family. As to quaternary structure, monomer.

It is found in the cytoplasm. The enzyme catalyses guanosine(1207) in 16S rRNA + S-adenosyl-L-methionine = N(2)-methylguanosine(1207) in 16S rRNA + S-adenosyl-L-homocysteine + H(+). Specifically methylates the guanine in position 1207 of 16S rRNA in the 30S particle. The polypeptide is Ribosomal RNA small subunit methyltransferase C (Salmonella agona (strain SL483)).